Consider the following 151-residue polypeptide: NADH dehydrogenase [ubiquinone] 1 beta subcomplex subunit 11, mitochondrial (151 aa).

A mitochondrion-targeting transit peptide spans 1–29 (MAARLLSLYGRCLSAAGAMRGLPAARVRW). The interval 40-62 (GVEKKRQREPTMQWQEDPEPEDE) is disordered. A helical transmembrane segment spans residues 87-107 (AVFFFGFSIVLVFGTTFVAYV).

Belongs to the complex I NDUFB11 subunit family. As to quaternary structure, complex I is composed of 45 different subunits. Interacts with BCAP31.

Its subcellular location is the mitochondrion inner membrane. Its function is as follows. Accessory subunit of the mitochondrial membrane respiratory chain NADH dehydrogenase (Complex I), that is believed not to be involved in catalysis. Complex I functions in the transfer of electrons from NADH to the respiratory chain. The immediate electron acceptor for the enzyme is believed to be ubiquinone. This chain is NADH dehydrogenase [ubiquinone] 1 beta subcomplex subunit 11, mitochondrial (Ndufb11), found in Mus musculus (Mouse).